A 93-amino-acid chain; its full sequence is YcgL domain-containing protein VV1_0131 (93 aa).

The region spanning 1–84 (MLCSIYKSSK…PPENLLQQHK (84 aa)) is the YcgL domain. The tract at residues 72–93 (LPPPPENLLQQHKERKAQQKND) is disordered.

In Vibrio vulnificus (strain CMCP6), this protein is YcgL domain-containing protein VV1_0131.